The chain runs to 346 residues: NADH-ubiquinone oxidoreductase chain 2 (346 aa).

A run of 11 helical transmembrane segments spans residues 1–21, 25–45, 60–80, 96–116, 124–144, 149–169, 178–198, 200–220, 242–262, 274–294, and 325–345; these read MNPH…TITI, HWIM…PLIS, FLVQ…NAWA, MLLT…FWFP, LTTA…ILLM, LNPT…GWMG, ILAF…IYNP, LTLL…LSLN, AALM…GFMP, EMTT…FFYL, and IAIL…ILAA.

It belongs to the complex I subunit 2 family.

The protein resides in the mitochondrion inner membrane. The catalysed reaction is a ubiquinone + NADH + 5 H(+)(in) = a ubiquinol + NAD(+) + 4 H(+)(out). In terms of biological role, core subunit of the mitochondrial membrane respiratory chain NADH dehydrogenase (Complex I) that is believed to belong to the minimal assembly required for catalysis. Complex I functions in the transfer of electrons from NADH to the respiratory chain. The immediate electron acceptor for the enzyme is believed to be ubiquinone. This is NADH-ubiquinone oxidoreductase chain 2 (MT-ND2) from Struthio camelus (Common ostrich).